Reading from the N-terminus, the 259-residue chain is NH(3)-dependent NAD(+) synthetase (259 aa).

33-40 is an ATP binding site; it reads GLSGGIDS. Aspartate 39 provides a ligand contact to Mg(2+). Arginine 119 serves as a coordination point for deamido-NAD(+). Threonine 139 lines the ATP pocket. Glutamate 144 serves as a coordination point for Mg(2+). Residues lysine 152 and aspartate 159 each coordinate deamido-NAD(+). The ATP site is built by lysine 168 and serine 190. 249-250 is a binding site for deamido-NAD(+); the sequence is HK.

Belongs to the NAD synthetase family. As to quaternary structure, homodimer.

It catalyses the reaction deamido-NAD(+) + NH4(+) + ATP = AMP + diphosphate + NAD(+) + H(+). It functions in the pathway cofactor biosynthesis; NAD(+) biosynthesis; NAD(+) from deamido-NAD(+) (ammonia route): step 1/1. In terms of biological role, catalyzes the ATP-dependent amidation of deamido-NAD to form NAD. Uses ammonia as a nitrogen source. This chain is NH(3)-dependent NAD(+) synthetase, found in Methanocaldococcus jannaschii (strain ATCC 43067 / DSM 2661 / JAL-1 / JCM 10045 / NBRC 100440) (Methanococcus jannaschii).